The chain runs to 324 residues: MATH domain and coiled-coil domain-containing protein At3g44790 (324 aa).

Positions 3–125 (YEKFTWVIKN…NNEVKIVVEV (123 aa)) constitute an MATH domain. Residues 241–309 (FKVDWLERKL…ALLEKEKAKS (69 aa)) adopt a coiled-coil conformation.

This Arabidopsis thaliana (Mouse-ear cress) protein is MATH domain and coiled-coil domain-containing protein At3g44790.